Consider the following 890-residue polypeptide: Receptor like protein 23 (890 aa).

The signal sequence occupies residues 1–22; that stretch reads MSKALLHLHFLSLFLLCCVCHS. Residues 23–850 are Extracellular-facing; that stretch reads SIFTLNFHFT…EEEEEVLNGR (828 aa). Asn-58, Asn-70, Asn-91, Asn-109, and Asn-145 each carry an N-linked (GlcNAc...) asparagine glycan. 27 LRR repeats span residues 97 to 121, 123 to 145, 146 to 171, 173 to 195, 196 to 218, 220 to 243, 244 to 268, 270 to 290, 291 to 316, 318 to 339, 340 to 363, 364 to 389, 391 to 411, 412 to 436, 438 to 461, 462 to 485, 487 to 506, 507 to 527, 528 to 551, 553 to 575, 577 to 598, 599 to 623, 626 to 650, 699 to 724, 726 to 747, 748 to 771, and 773 to 796; these read FHQL…GFGN, KRLE…SFSN, LTML…GLRK, IVLD…LFEL, HQLR…KFGN, HRLE…ISNL, TRLT…NLTN, YELD…LLTL, PFLA…STSS, LEIM…ISKL, INLK…LFSS, LKSL…SYIP, TLEM…ILKT, LKEL…LWSL, LLQS…ILVN, SSVL…PLSI, GFGV…ICNR, SSLA…PPCL, RNLE…LCDG, SLRT…FVNC, SLKF…WLKA, LPNL…HQGP, FPEL…YFVN, LTSY…GLLK, LIAV…MANL, ENLE…LGSI, and FLAY…QITG. N-linked (GlcNAc...) asparagine glycans are attached at residues Asn-189, Asn-207, Asn-242, and Asn-265. An N-linked (GlcNAc...) asparagine glycan is attached at Asn-311. The N-linked (GlcNAc...) asparagine glycan is linked to Asn-351. N-linked (GlcNAc...) asparagine glycosylation occurs at Asn-461. Residues Asn-505 and Asn-518 are each glycosylated (N-linked (GlcNAc...) asparagine). Asn-574 is a glycosylation site (N-linked (GlcNAc...) asparagine). The N-linked (GlcNAc...) asparagine glycan is linked to Asn-730. Asn-778 is a glycosylation site (N-linked (GlcNAc...) asparagine). A helical membrane pass occupies residues 851-871; that stretch reads AVAIGYGSGLLLGLAIAQVIA. The Cytoplasmic segment spans residues 872 to 890; that stretch reads SYKPEWLVKIIGLNKRRKR.

It belongs to the RLP family. Directly interacts with a 20-mer fragment (nlp20) from NLPs through its extracellular LRR domain. Component of a trimeric complex composed of RLP23, SOBIR1 and BAK1. BAK1 is recruited into a pre-formed RLP23-SOBIR1 complex in a ligand-dependent manner. Interacts with SOBIR1.

It localises to the cell membrane. Involved in the perception of necrosis and ethylene-inducing peptide 1-like proteins (NLPs), that act as extracellular signals mediating immune activation. Component of the RLP23-SOBIR1-BAK1 complex that mediates NLP-triggered immunity. The protein is Receptor like protein 23 of Arabidopsis thaliana (Mouse-ear cress).